We begin with the raw amino-acid sequence, 430 residues long: Sorting nexin-4 (430 aa).

The segment covering 1–18 (MDSASADASVTGSGNAKG) has biased composition (polar residues). The interval 1–22 (MDSASADASVTGSGNAKGSSAE) is disordered. A PX domain is found at 33 to 162 (LEILVSDPQK…IFLVGNEWDT (130 aa)). The a 1,2-diacyl-sn-glycero-3-phospho-(1D-myo-inositol-3-phosphate) site is built by R83, K109, and R128. Positions 351-414 (ASRRDKINKL…NNLADENIKF (64 aa)) form a coiled coil.

The protein belongs to the sorting nexin family.

It localises to the cytoplasm. Its subcellular location is the cytosol. The protein resides in the preautophagosomal structure membrane. The protein localises to the endosome membrane. Functionally, sorting nexin, involved in the separation or division of vacuoles throughout the entire life cycle of the cells. Involved in retrieval of late-Golgi SNAREs from post-Golgi endosomes to the trans-Golgi network, for cytoplasm to vacuole transport (Cvt), and autophagy of large cargos including mitophagy, pexophagy and glycophagy. This chain is Sorting nexin-4 (SNX4), found in Candida glabrata (strain ATCC 2001 / BCRC 20586 / JCM 3761 / NBRC 0622 / NRRL Y-65 / CBS 138) (Yeast).